Consider the following 616-residue polypeptide: Zinc metalloproteinase-disintegrin-like protein H3 (616 aa).

Residues methionine 1–serine 20 form the signal peptide. The propeptide occupies isoleucine 21–proline 193. Pyrrolidone carboxylic acid (Glu) is present on glutamate 194. The 197-residue stretch at lysine 203 to proline 399 folds into the Peptidase M12B domain. 3 disulfides stabilise this stretch: cysteine 314/cysteine 394, cysteine 354/cysteine 378, and cysteine 356/cysteine 361. Histidine 339 contributes to the Zn(2+) binding site. Residues histidine 339 to aspartate 350 carry the Metal-binding motif. Glutamate 340 functions as the Proton acceptor in the catalytic mechanism. Zn(2+)-binding residues include histidine 343 and histidine 349. N-linked (GlcNAc...) asparagine glycosylation occurs at asparagine 377. The Disintegrin domain maps to proline 407–asparagine 493. Residues valine 409, asparagine 412, glutamate 416, glutamate 419, and aspartate 422 each contribute to the Ca(2+) site. 14 disulfides stabilise this stretch: cysteine 410–cysteine 439, cysteine 421–cysteine 434, cysteine 423–cysteine 429, cysteine 433–cysteine 456, cysteine 447–cysteine 453, cysteine 452–cysteine 478, cysteine 465–cysteine 485, cysteine 472–cysteine 504, cysteine 497–cysteine 509, cysteine 516–cysteine 566, cysteine 531–cysteine 577, cysteine 544–cysteine 554, cysteine 561–cysteine 603, and cysteine 597–cysteine 609. The D/ECD-tripeptide motif lies at glutamate 471 to aspartate 473. Residues aspartate 473, aspartate 476, and aspartate 488 each contribute to the Ca(2+) site. Asparagine 506 carries an N-linked (GlcNAc...) asparagine glycan.

This sequence belongs to the venom metalloproteinase (M12B) family. P-III subfamily. P-IIIc sub-subfamily. Homodimer; disulfide-linked. Zn(2+) serves as cofactor. N-glycosylated. In terms of processing, the N-terminus is blocked. In terms of tissue distribution, expressed by the venom gland (at protein level). Expressed by the venom gland.

The protein localises to the secreted. Its activity is regulated as follows. The proteolytic activity requires Zn(2+) and Ca(2+) ions. The alpha-fibrinogenase activity is completely inhibited by EDTA, but not by PMSF. Functionally, zinc metalloprotease that has fibrinogenolytic and hemorrhagic activities. Cleaves insulin B chain readily at '38-Ala-|-Leu-39' bond, and at a significantly slower rate, at '40-Tyr-|-Leu-41' bond. Hydrolyzes isolated extracellular matrix (ECM) bovine fibronectin, and basal membrane (BM) proteins human collagen IV and, to a lesser extent, murine laminin, in vitro. Cleaves murine nidogen (at '350-Ser-|-Phe-351' and '380-Tyr-|-Asn-381' bonds), but not laminin, in a solubilized BM preparation. Hydrolyzes plasma proteins involved in blood coagulation in vitro. It significantly prolongs thrombin time. Has potent alpha-fibrinogenase activity cleaving human fibrinogen alpha chain at '432-Lys-|-Leu-433' bond, but does not cleave beta or gamma chains. Hydrolyzes bovine prothrombin, but does not cleave it at '366-Arg-|-Ile-367' bond, which is necessary for the formation of active alpha-thrombin, however, the cleavage of fragment 1 from it leads to reduced alpha-thrombin formation. Hydrolyzes bovine factor X heavy chain at '211-Ser-|-Leu-212', '213-Asp-|-Leu-214' and '216-Gly-|-Leu-217' bonds activating it only marginally as does not cleave at the physiological activation site. Does not cleave factor X light chain. No hydrolysis or activation of plasminogen. The alpha-fibrinogenase activity likely contributes to its hemorrhagic activity, which in rat can be completely neutralized in vivo by anti-ammodytagin antibodies, which strongly cross-react with this protein. Has very weak collagen-, ADP- and ristocetin-induced platelet aggregation inhibition activity in vitro. In Vipera ammodytes ammodytes (Western sand viper), this protein is Zinc metalloproteinase-disintegrin-like protein H3.